Here is a 54-residue protein sequence, read N- to C-terminus: UPF0391 membrane protein Reut_A0124 (54 aa).

2 helical membrane-spanning segments follow: residues 5-25 and 30-50; these read ALVFFVIALIAAVFGFGGIAA and IAKILFFIFLIVALVTAVMGL.

This sequence belongs to the UPF0391 family.

The protein resides in the cell membrane. This chain is UPF0391 membrane protein Reut_A0124, found in Cupriavidus pinatubonensis (strain JMP 134 / LMG 1197) (Cupriavidus necator (strain JMP 134)).